A 334-amino-acid polypeptide reads, in one-letter code: Ornithine carbamoyltransferase (334 aa).

Carbamoyl phosphate is bound by residues S57–T60, Q84, R108, and H135–Q138. L-ornithine-binding positions include N169, D233, and S237–M238. Carbamoyl phosphate contacts are provided by residues C275 to L276 and R320.

It belongs to the aspartate/ornithine carbamoyltransferase superfamily. OTCase family.

It localises to the cytoplasm. The enzyme catalyses carbamoyl phosphate + L-ornithine = L-citrulline + phosphate + H(+). The protein operates within amino-acid biosynthesis; L-arginine biosynthesis; L-arginine from L-ornithine and carbamoyl phosphate: step 1/3. Reversibly catalyzes the transfer of the carbamoyl group from carbamoyl phosphate (CP) to the N(epsilon) atom of ornithine (ORN) to produce L-citrulline. This chain is Ornithine carbamoyltransferase (argF), found in Pasteurella multocida (strain Pm70).